Consider the following 292-residue polypeptide: Small ribosomal subunit biogenesis GTPase RsgA (292 aa).

Residues K62–L213 form the CP-type G domain. Residues S111–D114 and G156–T164 each bind GTP. The Zn(2+) site is built by C237, C242, H244, and C250.

It belongs to the TRAFAC class YlqF/YawG GTPase family. RsgA subfamily. In terms of assembly, monomer. Associates with 30S ribosomal subunit, binds 16S rRNA. Requires Zn(2+) as cofactor.

It is found in the cytoplasm. Its function is as follows. One of several proteins that assist in the late maturation steps of the functional core of the 30S ribosomal subunit. Helps release RbfA from mature subunits. May play a role in the assembly of ribosomal proteins into the subunit. Circularly permuted GTPase that catalyzes slow GTP hydrolysis, GTPase activity is stimulated by the 30S ribosomal subunit. The polypeptide is Small ribosomal subunit biogenesis GTPase RsgA (Streptococcus pneumoniae serotype 4 (strain ATCC BAA-334 / TIGR4)).